We begin with the raw amino-acid sequence, 462 residues long: Argininosuccinate lyase (462 aa).

Belongs to the lyase 1 family. Argininosuccinate lyase subfamily.

The protein localises to the cytoplasm. It carries out the reaction 2-(N(omega)-L-arginino)succinate = fumarate + L-arginine. It participates in amino-acid biosynthesis; L-arginine biosynthesis; L-arginine from L-ornithine and carbamoyl phosphate: step 3/3. This is Argininosuccinate lyase from Rippkaea orientalis (strain PCC 8801 / RF-1) (Cyanothece sp. (strain PCC 8801)).